The chain runs to 480 residues: CASP8 and FADD-like apoptosis regulator (480 aa).

2 DED domains span residues 1–73 (MSAE…RILK) and 92–170 (DYRV…KIQK). Positions 1 to 195 (MSAEVIHQVE…LQAAIQKSLK (195 aa)) are interaction with CASP8. Positions 1-227 (MSAEVIHQVE…GAQQEPVKKS (227 aa)) are interaction with FADD. Residues 1–305 (MSAEVIHQVE…FACMPEHRDY (305 aa)) are interaction with CASP8 propeptide. Residues 1 to 435 (MSAEVIHQVE…CLSQKLRQER (435 aa)) are not proteolytically processed and involved in apoptosis inhibition. Positions 192 to 435 (KSLKDPSNNF…CLSQKLRQER (244 aa)) are interaction with CASP3. Residues 192 to 480 (KSLKDPSNNF…LRKKLILSYT (289 aa)) are interaction with TRAF1 and TRAF2. Residues 217–480 (LGAQQEPVKK…LRKKLILSYT (264 aa)) are interaction with CASP8 subunits p18 and p10. Positions 263–358 (ETELLRDTFT…AGKPKMFFIQ (96 aa)) are caspase. The interval 370 to 480 (SSLLEVDGPA…LRKKLILSYT (111 aa)) is interaction with CASP8.

This sequence belongs to the peptidase C14A family. In terms of assembly, TNFRSF6 stimulation triggers recruitment to the death-inducing signaling complex (DISC) formed by TNFRSF6, FADD and CASP8. A proteolytic fragment (p43) stays associated with the DISC. Also interacts with FADD, CASP8, CASP3, TRAF1, TRAF2 and Bcl-X(L) (in vitro). Interacts with RIPK1. As to quaternary structure, (Microbial infection) Interacts with HBV protein X. In terms of processing, proteolytically processed by CASP8 generating subunit p43 and p12. Widely expressed. Higher expression in skeletal muscle, pancreas, heart, kidney, placenta, and peripheral blood leukocytes. Also detected in diverse cell lines. Isoform 8 is predominantly expressed in testis and skeletal muscle.

In terms of biological role, apoptosis regulator protein which may function as a crucial link between cell survival and cell death pathways in mammalian cells. Acts as an inhibitor of TNFRSF6 mediated apoptosis. A proteolytic fragment (p43) is likely retained in the death-inducing signaling complex (DISC) thereby blocking further recruitment and processing of caspase-8 at the complex. Full length and shorter isoforms have been shown either to induce apoptosis or to reduce TNFRSF-triggered apoptosis. Lacks enzymatic (caspase) activity. This chain is CASP8 and FADD-like apoptosis regulator (CFLAR), found in Homo sapiens (Human).